The following is a 146-amino-acid chain: Large ribosomal subunit protein bL9 (146 aa).

This sequence belongs to the bacterial ribosomal protein bL9 family.

In terms of biological role, binds to the 23S rRNA. In Symbiobacterium thermophilum (strain DSM 24528 / JCM 14929 / IAM 14863 / T), this protein is Large ribosomal subunit protein bL9.